The following is a 121-amino-acid chain: Iron-sulfur cluster assembly protein CyaY (121 aa).

Belongs to the frataxin family.

Its function is as follows. Involved in iron-sulfur (Fe-S) cluster assembly. May act as a regulator of Fe-S biogenesis. The sequence is that of Iron-sulfur cluster assembly protein CyaY from Buchnera aphidicola subsp. Schizaphis graminum (strain Sg).